Reading from the N-terminus, the 767-residue chain is Protein ROLLING AND ERECT LEAF 2 (767 aa).

3 disordered regions span residues 1 to 20 (MGCTASKVEQEDTVRRCKER), 78 to 187 (PALA…SEFF), and 201 to 309 (RELE…SSTV). Pro residues-rich tracts occupy residues 81 to 90 (APTPTPPPPS) and 110 to 126 (APPPPPPTQSHQPPPPV). Low complexity predominate over residues 145-155 (SDSSVASPARS). The span at 201 to 210 (RELEEEEKAR) shows a compositional bias: basic and acidic residues. A compositionally biased stretch (acidic residues) spans 221–232 (EDEVDDDDDERE). The segment covering 255 to 264 (TRSEEGEMGN) has biased composition (basic and acidic residues).

As to expression, highly expressed in young leaves and panicles. Expressed at low levels in roots.

It localises to the cell membrane. Its function is as follows. Involved in the regulation of leaf shape formation. May function by coordinating the expression of genes associated with leaf and bulliform cell development. The sequence is that of Protein ROLLING AND ERECT LEAF 2 from Oryza sativa subsp. japonica (Rice).